Consider the following 50-residue polypeptide: Large ribosomal subunit protein bL33 (50 aa).

It belongs to the bacterial ribosomal protein bL33 family.

This chain is Large ribosomal subunit protein bL33, found in Hydrogenovibrio crunogenus (strain DSM 25203 / XCL-2) (Thiomicrospira crunogena).